A 629-amino-acid chain; its full sequence is tRNA uridine 5-carboxymethylaminomethyl modification enzyme MnmG (629 aa).

Residues 14–19 (GAGHAG), V126, and S181 contribute to the FAD site. 273–287 (GPRYCPSIEDKVVRF) is a binding site for NAD(+). An FAD-binding site is contributed by Q370.

The protein belongs to the MnmG family. In terms of assembly, homodimer. Heterotetramer of two MnmE and two MnmG subunits. The cofactor is FAD.

The protein localises to the cytoplasm. Its function is as follows. NAD-binding protein involved in the addition of a carboxymethylaminomethyl (cmnm) group at the wobble position (U34) of certain tRNAs, forming tRNA-cmnm(5)s(2)U34. The protein is tRNA uridine 5-carboxymethylaminomethyl modification enzyme MnmG of Bacillus mycoides (strain KBAB4) (Bacillus weihenstephanensis).